Consider the following 256-residue polypeptide: Adenylate kinase (256 aa).

Glycine 45–threonine 50 lines the ATP pocket. Positions alanine 67–valine 96 are NMP. Residues threonine 68, arginine 73, alanine 94–valine 96, glycine 123–arginine 126, and glutamine 130 contribute to the AMP site. The tract at residues glycine 164–aspartate 201 is LID. ATP contacts are provided by residues arginine 165 and serine 174–tyrosine 175. AMP contacts are provided by arginine 198 and arginine 209. Glutamine 237 contacts ATP.

It belongs to the adenylate kinase family. AK2 subfamily. Monomer.

It localises to the cytoplasm. It is found in the cytosol. The protein localises to the mitochondrion intermembrane space. It catalyses the reaction AMP + ATP = 2 ADP. In terms of biological role, catalyzes the reversible transfer of the terminal phosphate group between ATP and AMP. Plays an important role in cellular energy homeostasis and in adenine nucleotide metabolism. Adenylate kinase activity is critical for regulation of the phosphate utilization and the AMP de novo biosynthesis pathways. The protein is Adenylate kinase of Malassezia globosa (strain ATCC MYA-4612 / CBS 7966) (Dandruff-associated fungus).